The sequence spans 236 residues: MKYKLLPCLLAILLTGCDRTEVTLSFTPEMASFSNEFDFDPLRGPVKDFTQTLMDEQGEVTKRVSGTLSEEGCFDSLELLDLENNTLVALVLDANYYRDAETLEKRVRLQGKCQLAELPSAGVSWETDDNGFVIKASSKQMQMEYRYDDQGYPLGKTTKSNDKTLSVSATPSTDPIKKLDYTAVTLLNNQRVGNVKQSCEYDNHANPVDCQLIIVDEGVKPAVERVYTIKNTIDYY.

The first 16 residues, M1–G16, serve as a signal peptide directing secretion. The N-palmitoyl cysteine moiety is linked to residue C17. C17 is lipidated: S-diacylglycerol cysteine.

It belongs to the UPF0257 family.

It is found in the cell membrane. The protein is UPF0257 lipoprotein YnfC of Escherichia coli O45:K1 (strain S88 / ExPEC).